We begin with the raw amino-acid sequence, 298 residues long: Mitochondrial basic amino acids transporter (298 aa).

The next 6 helical transmembrane spans lie at 2 to 22 (ALDF…GHPF), 61 to 81 (GLGS…GVQG), 96 to 116 (FLAG…MELA), 153 to 172 (GMVS…FLTY), 187 to 207 (LLVP…WLST), and 255 to 275 (LLRA…VLSY). 3 Solcar repeats span residues 2–86 (ALDF…TLRA), 90–178 (DSPL…LTRA), and 185–275 (DRLL…VLSY).

It belongs to the mitochondrial carrier (TC 2.A.29) family.

It localises to the mitochondrion inner membrane. It catalyses the reaction L-lysine(out) + L-arginine(in) = L-lysine(in) + L-arginine(out). The enzyme catalyses L-histidine(out) + L-arginine(in) = L-histidine(in) + L-arginine(out). The catalysed reaction is L-ornithine(in) + L-arginine(out) = L-ornithine(out) + L-arginine(in). It carries out the reaction L-homoarginine(in) + L-arginine(out) = L-homoarginine(out) + L-arginine(in). It catalyses the reaction N(omega)-methyl-L-arginine(in) + L-arginine(out) = N(omega)-methyl-L-arginine(out) + L-arginine(in). The enzyme catalyses L-arginine(in) = L-arginine(out). The catalysed reaction is L-lysine(in) = L-lysine(out). It carries out the reaction L-ornithine(in) = L-ornithine(out). It catalyses the reaction L-histidine(out) = L-histidine(in). Functionally, mitochondrial transporter of arginine, lysine, homoarginine, methylarginine and, to a much lesser extent, ornithine and histidine. Does not transport carnitine nor acylcarnitines. Functions by both counter-exchange and uniport mechanisms. Plays a physiological role in the import of basic amino acids into mitochondria for mitochondrial protein synthesis and amino acid degradation. In Bos taurus (Bovine), this protein is Mitochondrial basic amino acids transporter (SLC25A29).